A 479-amino-acid chain; its full sequence is Phosphoglycerate kinase, glycosomal (479 aa).

Positions 23, 24, 25, 26, 39, 61, 62, 64, 65, 132, 168, and 169 each coordinate (2R)-3-phosphoglycerate. Residues Gly214 and Ala215 each coordinate ADP. Position 214 (Gly214) interacts with CDP. 2 residues coordinate AMP: Ala215 and Lys216. Residue Ala215 coordinates ATP. Ala215 is a binding site for Mg(2+). Lys216 is a binding site for (2R)-3-phosphoglycerate. Asp219 is a CDP binding site. Mg(2+) is bound at residue Asp219. ADP contacts are provided by Lys220 and Gly238. Position 220 (Lys220) interacts with AMP. Residue Lys220 coordinates ATP. Position 238 (Gly238) interacts with CDP. AMP is bound by residues Ala239 and Ala311. Positions 239 and 311 each coordinate ATP. ADP-binding residues include Ala311 and Asn335. Residues Gly336 and Phe341 each contribute to the CDP site. 4 residues coordinate ADP: Phe341, Glu342, Asp374, and Ser375. Glu342 lines the AMP pocket. 3 residues coordinate ATP: Glu342, Asp374, and Ser375. Mg(2+) is bound at residue Asp374.

It belongs to the phosphoglycerate kinase family. As to quaternary structure, monomer. Requires Mg(2+) as cofactor.

It is found in the glycosome. The catalysed reaction is (2R)-3-phosphoglycerate + ATP = (2R)-3-phospho-glyceroyl phosphate + ADP. It functions in the pathway carbohydrate degradation; glycolysis; pyruvate from D-glyceraldehyde 3-phosphate: step 2/5. In Leishmania major, this protein is Phosphoglycerate kinase, glycosomal (PGKC).